A 425-amino-acid polypeptide reads, in one-letter code: 3-phosphoshikimate 1-carboxyvinyltransferase (425 aa).

Residues lysine 23, serine 24, and arginine 28 each coordinate 3-phosphoshikimate. Lysine 23 is a phosphoenolpyruvate binding site. Phosphoenolpyruvate is bound by residues glycine 96 and arginine 124. Positions 170, 171, 172, 198, 314, and 341 each coordinate 3-phosphoshikimate. Position 172 (glutamine 172) interacts with phosphoenolpyruvate. Aspartate 314 functions as the Proton acceptor in the catalytic mechanism. Arginine 345, arginine 386, and lysine 411 together coordinate phosphoenolpyruvate.

Belongs to the EPSP synthase family. Monomer.

It localises to the cytoplasm. The catalysed reaction is 3-phosphoshikimate + phosphoenolpyruvate = 5-O-(1-carboxyvinyl)-3-phosphoshikimate + phosphate. The protein operates within metabolic intermediate biosynthesis; chorismate biosynthesis; chorismate from D-erythrose 4-phosphate and phosphoenolpyruvate: step 6/7. Catalyzes the transfer of the enolpyruvyl moiety of phosphoenolpyruvate (PEP) to the 5-hydroxyl of shikimate-3-phosphate (S3P) to produce enolpyruvyl shikimate-3-phosphate and inorganic phosphate. This chain is 3-phosphoshikimate 1-carboxyvinyltransferase, found in Nostoc sp. (strain PCC 7120 / SAG 25.82 / UTEX 2576).